Reading from the N-terminus, the 440-residue chain is Adenylosuccinate synthetase (440 aa).

GTP contacts are provided by residues 13 to 19 (GDEGKGK) and 41 to 43 (GHT). Asp14 acts as the Proton acceptor in catalysis. 2 residues coordinate Mg(2+): Asp14 and Gly41. IMP-binding positions include 14 to 17 (DEGK), 39 to 42 (NAGH), Thr135, Arg149, Gln230, Thr245, and Arg313. The active-site Proton donor is the His42. 309–315 (TVTKRKR) contributes to the substrate binding site. Residues Arg315, 341-343 (KLD), and 423-425 (STG) each bind GTP.

It belongs to the adenylosuccinate synthetase family. Homodimer. Mg(2+) serves as cofactor.

The protein resides in the cytoplasm. The enzyme catalyses IMP + L-aspartate + GTP = N(6)-(1,2-dicarboxyethyl)-AMP + GDP + phosphate + 2 H(+). The protein operates within purine metabolism; AMP biosynthesis via de novo pathway; AMP from IMP: step 1/2. Plays an important role in the de novo pathway of purine nucleotide biosynthesis. Catalyzes the first committed step in the biosynthesis of AMP from IMP. This is Adenylosuccinate synthetase from Methylobacillus flagellatus (strain ATCC 51484 / DSM 6875 / VKM B-1610 / KT).